Consider the following 208-residue polypeptide: MSNPQAERLVHFLAVNGIRDSEVLSAIARVPRECFLSQAMMHQAYDNNALPIGQGQTISQPYIVAKMTELLRLKRDSKVLEIGTGSGYQTAVLALLVEHVYSVERIKSLQWDAKRRLKQLDIYNVSTKHGDGWLGWENKGPFDAIIVTAAAESVPPVLLQQLNDGGRMVLPVGTDEQQLILIERQKDQFVSQVIEAVNFVPLIAGDLA.

Residue serine 59 is part of the active site.

It belongs to the methyltransferase superfamily. L-isoaspartyl/D-aspartyl protein methyltransferase family.

It is found in the cytoplasm. It catalyses the reaction [protein]-L-isoaspartate + S-adenosyl-L-methionine = [protein]-L-isoaspartate alpha-methyl ester + S-adenosyl-L-homocysteine. Functionally, catalyzes the methyl esterification of L-isoaspartyl residues in peptides and proteins that result from spontaneous decomposition of normal L-aspartyl and L-asparaginyl residues. It plays a role in the repair and/or degradation of damaged proteins. The polypeptide is Protein-L-isoaspartate O-methyltransferase (Vibrio vulnificus (strain CMCP6)).